Consider the following 308-residue polypeptide: MRKLVVGSRRSKLALTQSQQFIDKLKAVEPNLEIEIKEIVTKGDRIVDKQLSKVGGKGLFVKEIQHELFEKNIDMAIHSLKDVPSVIPEGLTLGCIPDRELPFDAYISKTHTPLSQLPEGSIIGTSSLRRGAQILSKYPNLEIKWIRGNIDTRLEKLQTEDYDAIILAAAGLRRMGWSDDIVTSYLDIDTLLPAIGQGALGIECRSDDEELLTLLSKVHNDEVAKCVTAERTFLAEMDGSCQVPIAGYATISDQKEIEFTGLIMTPDGKERFEYTMNGTDPVELGKKVSNKLKEQGAYEIIKRLNEQH.

C241 is modified (S-(dipyrrolylmethanemethyl)cysteine).

Belongs to the HMBS family. In terms of assembly, monomer. Dipyrromethane serves as cofactor.

The enzyme catalyses 4 porphobilinogen + H2O = hydroxymethylbilane + 4 NH4(+). It participates in porphyrin-containing compound metabolism; protoporphyrin-IX biosynthesis; coproporphyrinogen-III from 5-aminolevulinate: step 2/4. Tetrapolymerization of the monopyrrole PBG into the hydroxymethylbilane pre-uroporphyrinogen in several discrete steps. In Staphylococcus aureus (strain bovine RF122 / ET3-1), this protein is Porphobilinogen deaminase.